A 257-amino-acid polypeptide reads, in one-letter code: MILLVDAGNTNIVLGVYKDKKYIASWRISTEGNKTSDEYSIQIMQLLNLNNLNPEDVKGIIVSSVVPNIMHSLENMLRRCFGQEPIIVGPGIKTGINIKYDNPKEVGADRIVNAVAAFEIYKRPVIIIDFGTATTFCSVTENGDYLGGCICPGLRISADALFEKAAKLPRVELEVPRKVICKNTVSSIQSGVLFGYIGQVEYIVKKMKEEMNDGIEPYVIATGGLANLIANETDAIDKVDSDLTLEGLKILYKKNRE.

6-13 (DAGNTNIV) contributes to the ATP binding site. Residues Tyr-100 and 107–110 (GADR) each bind substrate. The active-site Proton acceptor is Asp-109. Asp-129 serves as a coordination point for K(+). Thr-132 is a binding site for ATP. Thr-184 lines the substrate pocket.

The protein belongs to the type III pantothenate kinase family. Homodimer. NH4(+) is required as a cofactor. K(+) serves as cofactor.

The protein resides in the cytoplasm. It catalyses the reaction (R)-pantothenate + ATP = (R)-4'-phosphopantothenate + ADP + H(+). It functions in the pathway cofactor biosynthesis; coenzyme A biosynthesis; CoA from (R)-pantothenate: step 1/5. In terms of biological role, catalyzes the phosphorylation of pantothenate (Pan), the first step in CoA biosynthesis. The chain is Type III pantothenate kinase from Clostridium botulinum (strain Alaska E43 / Type E3).